Consider the following 312-residue polypeptide: tRNA U34 carboxymethyltransferase (312 aa).

Carboxy-S-adenosyl-L-methionine-binding positions include Lys-88, Trp-102, Lys-107, Gly-127, 149–151, 177–178, Met-191, Tyr-195, and Arg-304; these read DPS and LD.

This sequence belongs to the class I-like SAM-binding methyltransferase superfamily. CmoB family. As to quaternary structure, homotetramer.

It carries out the reaction carboxy-S-adenosyl-L-methionine + 5-hydroxyuridine(34) in tRNA = 5-carboxymethoxyuridine(34) in tRNA + S-adenosyl-L-homocysteine + H(+). Functionally, catalyzes carboxymethyl transfer from carboxy-S-adenosyl-L-methionine (Cx-SAM) to 5-hydroxyuridine (ho5U) to form 5-carboxymethoxyuridine (cmo5U) at position 34 in tRNAs. This is tRNA U34 carboxymethyltransferase from Dichelobacter nodosus (strain VCS1703A).